A 617-amino-acid chain; its full sequence is Elongation factor 4 (617 aa).

A tr-type G domain is found at 17 to 198 (AIIRNFCIIA…KIVRDLPAPV (182 aa)). GTP contacts are provided by residues 29–34 (DHGKST) and 145–148 (NKID).

It belongs to the TRAFAC class translation factor GTPase superfamily. Classic translation factor GTPase family. LepA subfamily.

Its subcellular location is the cell membrane. The catalysed reaction is GTP + H2O = GDP + phosphate + H(+). Functionally, required for accurate and efficient protein synthesis under certain stress conditions. May act as a fidelity factor of the translation reaction, by catalyzing a one-codon backward translocation of tRNAs on improperly translocated ribosomes. Back-translocation proceeds from a post-translocation (POST) complex to a pre-translocation (PRE) complex, thus giving elongation factor G a second chance to translocate the tRNAs correctly. Binds to ribosomes in a GTP-dependent manner. The chain is Elongation factor 4 from Arthrobacter sp. (strain FB24).